A 419-amino-acid polypeptide reads, in one-letter code: MATIILGSQWGDEGKGKLSDILCQKARVCARAAGGHNAGHSVVANGVSYDFHLLPSGLVNPQCTNLIGSGVVFNVQAFFKELAALEEKGLSHARKNLLVSDRAQVNLELHARVDGLEERELAGNKIGTTGRGIGPSYANKAARNGIRVHEIFDQESFEAKLRRLAEGYKKRFGDLLEYDVEEEIARFRDYREKLPDFVVDAVNYMQAAQASGVDILIEGANALMLDIDYGTYPFVTSSNTGLGGVITGLAVNPRRINVAKAYTTRVGEGIFKSEDVGEAGKKLQDIGREWGVSTGRKRRCGWLDLVVLKYSASVNYYTAWNLTKLDVLDTFPTLKVAVAYKDPETGKELEYFPADLGYLERCEVVYREFEGWQTPTTAVKKFEDLPRQAQMYVRFVEEFTGVPVKWIGTGPGRDDMIYL.

Residues 11–17 and 39–41 each bind GTP; these read GDEGKGK and GHS. Asp12 acts as the Proton acceptor in catalysis. Residues Asp12 and Gly39 each contribute to the Mg(2+) site. IMP contacts are provided by residues 12 to 15, 37 to 40, Thr129, Arg143, Asn221, Thr236, and Arg296; these read DEGK and NAGH. Catalysis depends on His40, which acts as the Proton donor. Residue 292–298 coordinates substrate; sequence VSTGRKR. GTP is bound by residues Arg298, 324–326, and 408–410; these read KLD and GTG.

The protein belongs to the adenylosuccinate synthetase family. Homodimer. Requires Mg(2+) as cofactor.

It localises to the cytoplasm. The enzyme catalyses IMP + L-aspartate + GTP = N(6)-(1,2-dicarboxyethyl)-AMP + GDP + phosphate + 2 H(+). The protein operates within purine metabolism; AMP biosynthesis via de novo pathway; AMP from IMP: step 1/2. In terms of biological role, plays an important role in the de novo pathway and in the salvage pathway of purine nucleotide biosynthesis. Catalyzes the first committed step in the biosynthesis of AMP from IMP. This is Adenylosuccinate synthetase from Chaetomium globosum (strain ATCC 6205 / CBS 148.51 / DSM 1962 / NBRC 6347 / NRRL 1970) (Soil fungus).